A 971-amino-acid polypeptide reads, in one-letter code: Exportin-2 (971 aa).

The Importin N-terminal domain maps to Ala29 to Thr102.

This sequence belongs to the XPO2/CSE1 family. In terms of assembly, interacts with cftr. Detected in larval gut, liver, exocrine pancreas and part of the brain and retina at 96 hpf.

Its subcellular location is the cytoplasm. The protein resides in the nucleus. The protein localises to the apical cell membrane. It localises to the basal cell membrane. It is found in the lateral cell membrane. Its function is as follows. Export receptor for importin alpha. Mediates importin-alpha re-export from the nucleus to the cytoplasm after import substrates have been released into the nucleoplasm. Negatively regulates fluid secretion and plays a role in fluid homeostasis by down-regulating cftr activity. The sequence is that of Exportin-2 (cse1l) from Danio rerio (Zebrafish).